A 79-amino-acid polypeptide reads, in one-letter code: MKTFLFLFAVFFFLDPAKNAFFDEKCSRINGRCTESCLKNEELIALCQKNLKCCVTVQPCGRDKGDELDEDSGYNRTRG.

The signal sequence occupies residues 1-20; that stretch reads MKTFLFLFAVFFFLDPAKNA. Disulfide bonds link cysteine 26/cysteine 53, cysteine 33/cysteine 47, and cysteine 37/cysteine 54.

Belongs to the beta-defensin family.

It localises to the secreted. Its function is as follows. Has antibacterial activity. This chain is Beta-defensin 15 (Defb15), found in Rattus norvegicus (Rat).